We begin with the raw amino-acid sequence, 348 residues long: Uroporphyrinogen decarboxylase (348 aa).

Substrate contacts are provided by residues 27 to 31 (RQAGR), F46, D76, Y152, S207, and H320.

Belongs to the uroporphyrinogen decarboxylase family. Homodimer.

The protein resides in the cytoplasm. It catalyses the reaction uroporphyrinogen III + 4 H(+) = coproporphyrinogen III + 4 CO2. The protein operates within porphyrin-containing compound metabolism; protoporphyrin-IX biosynthesis; coproporphyrinogen-III from 5-aminolevulinate: step 4/4. Catalyzes the decarboxylation of four acetate groups of uroporphyrinogen-III to yield coproporphyrinogen-III. This chain is Uroporphyrinogen decarboxylase, found in Bacillus mycoides (strain KBAB4) (Bacillus weihenstephanensis).